Consider the following 338-residue polypeptide: Erlin-2 (338 aa).

Over 1 to 3 the chain is Cytoplasmic; that stretch reads MAQ. A helical transmembrane segment spans residues 4-24; it reads LGAVVAVAASFFCASLFSAVH. The Lumenal segment spans residues 25-338; that stretch reads KIEEGHIGVY…DEPMEADSEN (314 aa). An N-linked (GlcNAc...) asparagine glycan is attached at N106. The tract at residues 177–309 is interaction with ERLIN1; that stretch reads EAIRRNYELM…DIPNMFMDSA (133 aa). K267 is subject to N6-acetyllysine.

The protein belongs to the band 7/mec-2 family. In terms of assembly, forms a heteromeric complex with ERLIN1. In complex with ERLIN1, interacts with RNF170. Interacts with activated ITPR1, independently of the degree of ITPR1 polyubiquitination. Interacts with SCAP, INSIG1, SREBF1 and SREBF2 under cholesterol sufficiency conditions; indicative for an association with the SCAP-SREBP-INSIG complex. Probably part of an AMFR/gp78 and INSIG1-containing ubiquitin ligase complex involved in ERAD of HMGCR. Interacts with TMUB1; TMUB1 bridges the association with AMFR. Interacts with SYVN1 and RNF139. Interacts with TMEM259. Interacts with TMEM41B. Post-translationally, deubiquitinated by USP25; leading to stabilization.

Its subcellular location is the endoplasmic reticulum membrane. Functionally, component of the ERLIN1/ERLIN2 complex which mediates the endoplasmic reticulum-associated degradation (ERAD) of inositol 1,4,5-trisphosphate receptors (IP3Rs) such as ITPR1. Promotes sterol-accelerated ERAD of HMGCR probably implicating an AMFR/gp78-containing ubiquitin ligase complex. Involved in regulation of cellular cholesterol homeostasis by regulation the SREBP signaling pathway. May promote ER retention of the SCAP-SREBF complex. The polypeptide is Erlin-2 (ERLIN2) (Bos taurus (Bovine)).